Here is a 124-residue protein sequence, read N- to C-terminus: Small ribosomal subunit protein uS12 (124 aa).

A 3-methylthioaspartic acid modification is found at aspartate 89. Positions 105-124 (QGVKNRKQARSRYGAKKEKS) are disordered. Residues 108 to 118 (KNRKQARSRYG) are compositionally biased toward basic residues.

This sequence belongs to the universal ribosomal protein uS12 family. Part of the 30S ribosomal subunit. Contacts proteins S8 and S17. May interact with IF1 in the 30S initiation complex.

Its function is as follows. With S4 and S5 plays an important role in translational accuracy. In terms of biological role, interacts with and stabilizes bases of the 16S rRNA that are involved in tRNA selection in the A site and with the mRNA backbone. Located at the interface of the 30S and 50S subunits, it traverses the body of the 30S subunit contacting proteins on the other side and probably holding the rRNA structure together. The combined cluster of proteins S8, S12 and S17 appears to hold together the shoulder and platform of the 30S subunit. The protein is Small ribosomal subunit protein uS12 of Mycobacterium avium (strain 104).